A 533-amino-acid chain; its full sequence is T-complex protein 1 subunit delta (533 aa).

The disordered stretch occupies residues 1–24 (MVVKPAARGMKPQGQAYKDKSKPA).

This sequence belongs to the TCP-1 chaperonin family. Heterooligomeric complex of about 850 to 900 kDa that forms two stacked rings, 12 to 16 nm in diameter.

The protein localises to the cytoplasm. In terms of biological role, molecular chaperone; assists the folding of proteins upon ATP hydrolysis. Known to play a role, in vitro, in the folding of actin and tubulin. This Ochlerotatus triseriatus (Eastern treehole mosquito) protein is T-complex protein 1 subunit delta.